The following is a 224-amino-acid chain: Peroxiredoxin-6 (224 aa).

The Thioredoxin domain occupies 5 to 169; sequence LLLGDEAPNF…ILRVIISLQL (165 aa). A required and sufficient for targeting to lysosomes and lamellar bodies region spans residues 31 to 40; the sequence is DSWGILFSHP. Thr-44 carries the post-translational modification Phosphothreonine. The active-site Cysteine sulfenic acid (-SOH) intermediate; for peroxidase activity is Cys-47. Residue Lys-63 is modified to N6-acetyllysine. Tyr-89 carries the post-translational modification Phosphotyrosine. The active-site For phospholipase activity is Asp-140. Residue Thr-177 is modified to Phosphothreonine; by MAPK. Lys-209 is modified (N6-acetyllysine; alternate). An N6-succinyllysine; alternate modification is found at Lys-209.

This sequence belongs to the peroxiredoxin family. Prx6 subfamily. In terms of assembly, homodimer. Interacts with GSTP1; mediates PRDX6 glutathionylation and regeneration. Interacts with APEX1. Interacts with STH. May interact with FAM168B. May interact with HTR2A. The cofactor is Does not need Ca(2+) as cofactor.. In terms of processing, irreversibly inactivated by overoxidation of Cys-47 to sulfinic acid (Cys-SO(2)H) and sulfonic acid (Cys-SO(3)H) forms upon oxidative stress. Post-translationally, phosphorylation at Thr-177 by MAP kinases increases the phospholipase activity of the enzyme. The phosphorylated form exhibits a greater lysophosphatidylcholine acyltransferase activity compared to the non-phosphorylated form.

The protein resides in the cytoplasm. It is found in the lysosome. It catalyses the reaction a hydroperoxide + 2 glutathione = an alcohol + glutathione disulfide + H2O. The catalysed reaction is a 1,2-diacyl-sn-glycero-3-phosphocholine + H2O = a 1-acyl-sn-glycero-3-phosphocholine + a fatty acid + H(+). The enzyme catalyses a 1-acyl-sn-glycero-3-phosphocholine + an acyl-CoA = a 1,2-diacyl-sn-glycero-3-phosphocholine + CoA. It carries out the reaction 1-hexadecanoyl-sn-glycero-3-phosphocholine + hexadecanoyl-CoA = 1,2-dihexadecanoyl-sn-glycero-3-phosphocholine + CoA. It catalyses the reaction 1,2-dihexadecanoyl-sn-glycero-3-phosphocholine + H2O = 1-hexadecanoyl-sn-glycero-3-phosphocholine + hexadecanoate + H(+). In terms of biological role, thiol-specific peroxidase that catalyzes the reduction of hydrogen peroxide and organic hydroperoxides to water and alcohols, respectively. Can reduce H(2)O(2) and short chain organic, fatty acid, and phospholipid hydroperoxides. Also has phospholipase activity, and can therefore either reduce the oxidized sn-2 fatty acyl group of phospholipids (peroxidase activity) or hydrolyze the sn-2 ester bond of phospholipids (phospholipase activity). These activities are dependent on binding to phospholipids at acidic pH and to oxidized phospholipds at cytosolic pH. Plays a role in cell protection against oxidative stress by detoxifying peroxides and in phospholipid homeostasis. Exhibits acyl-CoA-dependent lysophospholipid acyltransferase which mediates the conversion of lysophosphatidylcholine (1-acyl-sn-glycero-3-phosphocholine or LPC) into phosphatidylcholine (1,2-diacyl-sn-glycero-3-phosphocholine or PC). Shows a clear preference for LPC as the lysophospholipid and for palmitoyl CoA as the fatty acyl substrate. This Bos taurus (Bovine) protein is Peroxiredoxin-6 (PRDX6).